The following is a 275-amino-acid chain: Tumor necrosis factor-inducible gene 6 protein (275 aa).

A signal peptide spans 1-17 (MVVLLCLCVLLWEEAHG). Residues 36 to 129 (GVYHREARAG…SERWDAYCYN (94 aa)) enclose the Link domain. 3 cysteine pairs are disulfide-bonded: cysteine 58/cysteine 127, cysteine 82/cysteine 103, and cysteine 135/cysteine 161. Asparagine 118 carries N-linked (GlcNAc...) asparagine glycosylation. Positions 135–247 (CGGVFTDPKR…GGFQIKYVTV (113 aa)) constitute a CUB domain. The Ca(2+) site is built by glutamate 183, aspartate 191, aspartate 232, serine 234, and valine 235. A disulfide bridge connects residues cysteine 188 and cysteine 210. The span at 253 to 264 (SSQAKNTSTTGN) shows a compositional bias: polar residues. The segment at 253-275 (SSQAKNTSTTGNKKFLPGRFSHL) is disordered. Asparagine 258 is a glycosylation site (N-linked (GlcNAc...) asparagine).

As to quaternary structure, interacts (via Link domain) with inter-alpha-inhibitor (I-alpha-I) component bikunin. Interacts with ITIH2/HC2; this interaction is required for transesterification of the HC to hyaluronan. Interacts (via Link and CUB domains) with ITIH1. Chondroitin sulfate may be required for the stability of the complex. Interacts (via Link domain) with various C-X-C and C-C chemokines including PF4, CXCL8, CXCL11, CXCL12, CCL2, CCL7, CCL19, CCL21, and CCL27; this interaction interferes with chemokine binding to glycosaminoglycans. Interacts (primarily via Link domain) with BMP2; this interaction is inhibited by hyaluronan. Interacts (via both Link and CUB domains) with TNFSF11. Interacts (via CUB domain) with FN1 (via type III repeats 9-14); this interaction enhances fibronectin fibril assembly. TNFAIP6 may act as a bridging molecule between FN1 and THBS1. Expressed in epiphyseal and metaphyseal bone marrow of both the femur and tibia (at protein level).

Its subcellular location is the secreted. Major regulator of extracellular matrix organization during tissue remodeling. Catalyzes the transfer of a heavy chain (HC) from inter-alpha-inhibitor (I-alpha-I) complex to hyaluronan. Cleaves the ester bond between the C-terminus of the HC and GalNAc residue of the chondroitin sulfate chain in I-alpha-I complex followed by transesterification of the HC to hyaluronan. In the process, potentiates the antiprotease function of I-alpha-I complex through release of free bikunin. Acts as a catalyst in the formation of hyaluronan-HC oligomers and hyaluronan-rich matrix surrounding the cumulus cell-oocyte complex, a necessary step for oocyte fertilization. Assembles hyaluronan in pericellular matrices that serve as platforms for receptor clustering and signaling. Enables binding of hyaluronan deposited on the surface of macrophages to LYVE1 on lymphatic endothelium and facilitates macrophage extravasation. Alters hyaluronan binding to functionally latent CD44 on vascular endothelium, switching CD44 into an active state that supports leukocyte rolling. Modulates the interaction of chemokines with extracellular matrix components and proteoglycans on endothelial cell surface, likely preventing chemokine gradient formation. In a negative feedback mechanism, may limit excessive neutrophil recruitment at inflammatory sites by antagonizing the association of CXCL8 with glycosaminoglycans on vascular endothelium. Has a role in osteogenesis and bone remodeling. Inhibits BMP2-dependent differentiation of mesenchymal stem cell to osteoblasts. Protects against bone erosion during inflammation by inhibiting TNFSF11/RANKL-dependent osteoclast activation. This is Tumor necrosis factor-inducible gene 6 protein (Tnfaip6) from Mus musculus (Mouse).